The primary structure comprises 69 residues: MKNLLICIIKMYRKYISPLKRPSCRFYPTCSQYSLEAIEKYGALKGTLISIKRILKCHPFNKGGYDPVK.

This sequence belongs to the UPF0161 family.

The protein resides in the cell membrane. Functionally, could be involved in insertion of integral membrane proteins into the membrane. The sequence is that of Putative membrane protein insertion efficiency factor from Clostridium botulinum (strain Okra / Type B1).